Consider the following 281-residue polypeptide: Lectin CaBo (281 aa).

The first 29 residues, 1–29, serve as a signal peptide directing secretion; sequence MAISKKSSLYLPIFTFITMLLMVVNKVSS. Residue Asp-119 coordinates Ca(2+). Arg-139 is an a carbohydrate binding site. The propeptide at 149–163 is removed in mature form; the sequence is IIKNSTTIDFNAAYN. Mn(2+)-binding residues include Glu-171 and Asp-173. Ca(2+) is bound by residues Asp-173, Tyr-175, Asn-177, and Asp-182. A carbohydrate is bound at residue Tyr-175. Asp-182 and His-187 together coordinate Mn(2+). 262 to 263 lines the a carbohydrate pocket; sequence LY.

This sequence belongs to the leguminous lectin family. In terms of assembly, equilibrium between homodimer and homotetramer. The mature chain consists of residues 164-281 followed by residues 30-148. Concanavalin A-like lectins of the Diocleinae subtribe undergo proteolytic processing referred to as circular permutation. The propeptide is split into an N-terminal and a C-terminal part, the gamma and beta chain, respectively. These are then religated in beta-gamma order to form the mature alpha chain. The beta and gamma chains can often be detected in cell extracts.

D-mannose-specific lectin. In Canavalia bonariensis, this protein is Lectin CaBo.